A 363-amino-acid polypeptide reads, in one-letter code: Ribosome-binding ATPase YchF (363 aa).

The 254-residue stretch at 3-256 folds into the OBG-type G domain; the sequence is FKCGIVGLPN…LDDEEKVEFL (254 aa). 12-17 contributes to the ATP binding site; it reads NVGKST. Residues serine 16 and threonine 36 each contribute to the Mg(2+) site. One can recognise a TGS domain in the interval 278–361; sequence NLQTYFTAGV…QDGDVMHFRF (84 aa).

Requires Mg(2+) as cofactor.

Its function is as follows. ATPase that binds to both the 70S ribosome and the 50S ribosomal subunit in a nucleotide-independent manner. Does not hydrolyze GTP. The polypeptide is Ribosome-binding ATPase YchF (Haemophilus influenzae (strain ATCC 51907 / DSM 11121 / KW20 / Rd)).